A 36-amino-acid polypeptide reads, in one-letter code: Asteropin-A (36 aa).

3 disulfide bridges follow: Cys-2-Cys-18, Cys-9-Cys-25, and Cys-17-Cys-35.

In terms of biological role, sialidase inhibitor. Competitively inhibits bacterial sialidases, but not viral sialidases. Does not inhibit glycosidases or proteases. Has no antitumor activity. In Asteropus simplex (Marine sponge), this protein is Asteropin-A.